The sequence spans 91 residues: UPF0250 protein PFLU_5418 (91 aa).

The protein belongs to the UPF0250 family.

This chain is UPF0250 protein PFLU_5418, found in Pseudomonas fluorescens (strain SBW25).